A 1001-amino-acid polypeptide reads, in one-letter code: ATP-dependent DNA/RNA helicase DHX36 (1001 aa).

The interval 1–44 (MSYDYHQSWSRDGGPRGSGQGSSGGGGGGSRGSGGGGGGRGGRG) is required for recruitment to cytoplasmic stress granules. The interval 1–54 (MSYDYHQSWSRDGGPRGSGQGSSGGGGGGSRGSGGGGGGRGGRGRHPAHLKGRE) is disordered. The segment at 1–97 (MSYDYHQSWS…IVQLLNSVQA (97 aa)) is required for the pre-miR-134 transport. The necessary for nuclear and nucleolar caps localizations stretch occupies residues 1 to 193 (MSYDYHQSWS…KKTDPRYIEM (193 aa)). The segment covering 15 to 41 (PRGSGQGSSGGGGGGSRGSGGGGGGRG) has biased composition (gly residues). The DSM (DHX36-specific motif) stretch occupies residues 46 to 68 (HPAHLKGREIGLWYAKKQTQKNK). Residues 46–98 (HPAHLKGREIGLWYAKKQTQKNKEAERQERAVVHMDERREEQIVQLLNSVQAK) are required for G4-DNA- and G4-RNA-binding. 2 recA-like domain regions span residues 99 to 379 (TDKD…MIHI) and 380 to 621 (PGFT…DYQL). The stretch at 120-147 (EVSSEKKINSEKKLDNQEKKLLNQEKKT) forms a coiled coil. Ser-154 bears the Phosphoserine mark. In terms of domain architecture, Helicase ATP-binding spans 210–380 (VNLINNHQVT…FGNCPMIHIP (171 aa)). ATP is bound at residue 226–231 (GCGKTT). Residues 258–310 (RRISAISVAERVATERAESCGNGNSTGYQIRLQSRLPRKQGSILYCTTGIILQ) are necessary for interaction with single-stranded DNA at the 3'-end of the G4-DNA structure. Positions 327 to 330 (DEIH) match the DEAH box motif. Mg(2+)-binding residues include Glu-328 and His-330. Residues 470–640 (ALIRYIVLEE…ELCLQIKILR (171 aa)) enclose the Helicase C-terminal domain. Residues 491–550 (WDNISTLHDLLMSQVMFKSDKFLIIPLHSLMPTVNQTQVFKKTPPGVRKIVIATNIAETS) are necessary for interaction with single-stranded DNA at the 3'-end of the G4-DNA structure. Residues 510–521 (DKFLIIPLHSLM) carry the Nuclear localization signal motif. ATP is bound by residues Ser-550 and 595 to 598 (RAGR). A WH domain region spans residues 622-691 (PEILRTPLEE…LGVHLARLPV (70 aa)). 3 necessary for interaction with single-stranded DNA at the 3'-end of the G4-DNA structure regions span residues 631–690 (ELCL…ARLP), 842–853 (NLGKKRKMVKVH), and 863–893 (HPKS…IYLY). An OB-fold-like subdomains region spans residues 834–898 (PKVAKIRLNL…SIYLYDCTEV (65 aa)). At Lys-940 the chain carries N6-acetyllysine. Ser-956 is modified (phosphoserine).

This sequence belongs to the DEAD box helicase family. DEAH subfamily. As to quaternary structure, found in a multi-helicase-TICAM1 complex at least composed of DHX36, DDX1, DDX21 and TICAM1; this complex exists in resting cells with or without dsRNA poly(I:C) ligand stimulation. Interacts (via C-terminus) with TICAM1 (via TIR domain). Interacts (via C-terminus) with DDX21; this interaction serves as bridges to TICAM1. Interacts with TERT; this interaction is dependent on the ability of DHX36 to bind to the G-quadruplex RNA (G4-RNA) structure present in the telomerase RNA template component (TERC). Interacts with DKC1; this interaction is dependent on the ability of DHX36 to bind to the G4-RNA structure present in TERC. Interacts with PARN; this interaction stimulates PARN to enhance uPA mRNA decay. Interacts with EXOSC3; this interaction occurs in a RNase-insensitive manner. Interacts with EXOSC10; this interaction occurs in a RNase-insensitive manner. Interacts with ILF3; this interaction occurs in a RNA-dependent manner. Interacts with ELAVL1; this interaction occurs in an RNA-dependent manner. Interacts with DDX5; this interaction occurs in a RNA-dependent manner. Interacts with DDX17; this interaction occurs in a RNA-dependent manner. Interacts with HDAC1; this interaction occurs in a RNA-dependent manner. Interacts with HDAC3; this interaction occurs in a RNA-dependent manner. Interacts with HDAC4. Interacts with AGO1. Interacts with AGO2. Interacts with ERCC6. Requires Mg(2+) as cofactor. Expressed in spermatogonia stem cells and primary spermatocytes (at protein level). Expressed strongly in testis. Weakly expressed in heart, lung, liver, kidney, small intestine, spleen, lymphe node and thymus.

It localises to the nucleus. The protein resides in the cytoplasm. The protein localises to the cytosol. Its subcellular location is the stress granule. It is found in the nucleus speckle. It localises to the chromosome. The protein resides in the telomere. The protein localises to the mitochondrion. Its subcellular location is the perikaryon. It is found in the cell projection. It localises to the dendrite. The protein resides in the axon. It catalyses the reaction ATP + H2O = ADP + phosphate + H(+). ATPase activity is enhanced in the presence of homomeric poly(U) RNAs, but not by double-stranded DNA (dsDNA), double-stranded RNA (dsRNA) and tRNA. Multifunctional ATP-dependent helicase that unwinds G-quadruplex (G4) structures. Plays a role in many biological processes such as genomic integrity, gene expression regulations and as a sensor to initiate antiviral responses. G4 structures correspond to helical structures containing guanine tetrads. Binds with high affinity to and unwinds G4 structures that are formed in nucleic acids (G4-DNA and G4-RNA). Plays a role in genomic integrity. Converts the G4-RNA structure present in telomerase RNA template component (TREC) into a double-stranded RNA to promote P1 helix formation that acts as a template boundary ensuring accurate reverse transcription. Plays a role in transcriptional regulation. Resolves G4-DNA structures in promoters of genes, such as YY1, KIT/c-kit and ALPL and positively regulates their expression. Plays a role in post-transcriptional regulation. Unwinds a G4-RNA structure located in the 3'-UTR polyadenylation site of the pre-mRNA TP53 and stimulates TP53 pre-mRNA 3'-end processing in response to ultraviolet (UV)-induced DNA damage. Binds to the precursor-microRNA-134 (pre-miR-134) terminal loop and regulates its transport into the synapto-dendritic compartment. Involved in the pre-miR-134-dependent inhibition of target gene expression and the control of dendritic spine size. Plays a role in the regulation of cytoplasmic mRNA translation and mRNA stability. Binds to both G4-RNA structures and alternative non-quadruplex-forming sequence within the 3'-UTR of the PITX1 mRNA regulating negatively PITX1 protein expression. Binds to both G4-RNA structure in the 5'-UTR and AU-rich elements (AREs) localized in the 3'-UTR of NKX2-5 mRNA to either stimulate protein translation or induce mRNA decay in an ELAVL1-dependent manner, respectively. Also binds to ARE sequences present in several mRNAs mediating exosome-mediated 3'-5' mRNA degradation. Involved in cytoplasmic urokinase-type plasminogen activator (uPA) mRNA decay. Component of a multi-helicase-TICAM1 complex that acts as a cytoplasmic sensor of viral double-stranded RNA (dsRNA) and plays a role in the activation of a cascade of antiviral responses including the induction of pro-inflammatory cytokines via the adapter molecule TICAM1. Required for the early embryonic development and hematopoiesis. Involved in the regulation of cardioblast differentiation and proliferation during heart development. Involved in spermatogonia differentiation. May play a role in ossification. In Mus musculus (Mouse), this protein is ATP-dependent DNA/RNA helicase DHX36.